The primary structure comprises 205 residues: Protein N-terminal glutamine amidohydrolase (205 aa).

Catalysis depends on residues C20, H74, and D90.

The protein belongs to the NTAQ1 family. Monomer.

It carries out the reaction N-terminal L-glutaminyl-[protein] + H2O = N-terminal L-glutamyl-[protein] + NH4(+). Functionally, mediates the side-chain deamidation of N-terminal glutamine residues to glutamate, an important step in N-end rule pathway of protein degradation. Conversion of the resulting N-terminal glutamine to glutamate renders the protein susceptible to arginylation, polyubiquitination and degradation as specified by the N-end rule. Does not act on substrates with internal or C-terminal glutamine and does not act on non-glutamine residues in any position. In Drosophila grimshawi (Hawaiian fruit fly), this protein is Protein N-terminal glutamine amidohydrolase (tun).